The primary structure comprises 287 residues: S-methyl-5'-thioadenosine phosphorylase (287 aa).

Phosphate contacts are provided by residues Thr13 and 55–56 (RH). Met186 contacts substrate. Residue Thr187 coordinates phosphate. 210 to 212 (DYD) is a binding site for substrate.

It belongs to the PNP/MTAP phosphorylase family. MTAP subfamily. In terms of assembly, homohexamer. Dimer of a homotrimer.

The enzyme catalyses S-methyl-5'-thioadenosine + phosphate = 5-(methylsulfanyl)-alpha-D-ribose 1-phosphate + adenine. Its pathway is amino-acid biosynthesis; L-methionine biosynthesis via salvage pathway; S-methyl-5-thio-alpha-D-ribose 1-phosphate from S-methyl-5'-thioadenosine (phosphorylase route): step 1/1. Catalyzes the reversible phosphorylation of S-methyl-5'-thioadenosine (MTA) to adenine and 5-methylthioribose-1-phosphate. Involved in the breakdown of MTA, a major by-product of polyamine biosynthesis. Responsible for the first step in the methionine salvage pathway after MTA has been generated from S-adenosylmethionine. Has broad substrate specificity with 6-aminopurine nucleosides as preferred substrates. The sequence is that of S-methyl-5'-thioadenosine phosphorylase from Leptospira interrogans serogroup Icterohaemorrhagiae serovar Lai (strain 56601).